A 235-amino-acid polypeptide reads, in one-letter code: Isopentenyl-diphosphate Delta-isomerase I (235 aa).

Lys-38 provides a ligand contact to substrate. Residues His-42 and His-54 each contribute to the Mg(2+) site. In terms of domain architecture, Nudix hydrolase spans 52–204 (LLHRAFSVFL…GLKLSPWFRL (153 aa)). Residues Arg-73 and Lys-77 each contribute to the substrate site. Residue Cys-89 is part of the active site. Residue Ser-90 coordinates substrate. Mg(2+)-binding residues include Glu-149 and Glu-151. Residue Glu-151 is part of the active site.

This sequence belongs to the IPP isomerase type 1 family. Mg(2+) is required as a cofactor.

The enzyme catalyses isopentenyl diphosphate = dimethylallyl diphosphate. It functions in the pathway isoprenoid biosynthesis; dimethylallyl diphosphate biosynthesis; dimethylallyl diphosphate from isopentenyl diphosphate: step 1/1. The protein operates within porphyrin-containing compound metabolism; chlorophyll biosynthesis. Catalyzes the 1,3-allylic rearrangement of the homoallylic substrate isopentenyl (IPP) to its highly electrophilic allylic isomer, dimethylallyl diphosphate (DMAPP). The polypeptide is Isopentenyl-diphosphate Delta-isomerase I (IPI1) (Camptotheca acuminata (Happy tree)).